We begin with the raw amino-acid sequence, 486 residues long: Cardiolipin synthase A (486 aa).

A run of 2 helical transmembrane segments spans residues 3–23 and 38–58; these read TFYT…IAGV and MTWL…YFAF. PLD phosphodiesterase domains follow at residues 219 to 246 and 399 to 426; these read MDLR…VDPR and EDGL…DMRS. Active-site residues include H224, K226, D231, H404, K406, and D411.

This sequence belongs to the phospholipase D family. Cardiolipin synthase subfamily. ClsA sub-subfamily.

It localises to the cell inner membrane. The enzyme catalyses 2 a 1,2-diacyl-sn-glycero-3-phospho-(1'-sn-glycerol) = a cardiolipin + glycerol. In terms of biological role, catalyzes the reversible phosphatidyl group transfer from one phosphatidylglycerol molecule to another to form cardiolipin (CL) (diphosphatidylglycerol) and glycerol. The polypeptide is Cardiolipin synthase A (Proteus mirabilis (strain HI4320)).